The chain runs to 430 residues: Glutamate-1-semialdehyde 2,1-aminomutase (430 aa).

Lysine 265 is modified (N6-(pyridoxal phosphate)lysine).

It belongs to the class-III pyridoxal-phosphate-dependent aminotransferase family. HemL subfamily. The cofactor is pyridoxal 5'-phosphate.

The protein localises to the cytoplasm. The enzyme catalyses (S)-4-amino-5-oxopentanoate = 5-aminolevulinate. Its pathway is porphyrin-containing compound metabolism; protoporphyrin-IX biosynthesis; 5-aminolevulinate from L-glutamyl-tRNA(Glu): step 2/2. In Caldivirga maquilingensis (strain ATCC 700844 / DSM 13496 / JCM 10307 / IC-167), this protein is Glutamate-1-semialdehyde 2,1-aminomutase.